A 398-amino-acid chain; its full sequence is MKVLVINCGSSSLKYQLIDMTTEDALAEGLVERIGINGSILTQKVKGREKYIVEQPLKDHQDAIELVLKSLIDENHGVIKSMDEISAVGHRVVHGGEKYSKSVLVNDEVMKNIEACIKLAPLHNPPNIIGIKACEELMPNTPMVCVFDTAFHQTMPEKAYMYPLPYEYYTEDHIRKYGFHGTSHKYVANKVAEVMKKDASELKTVTCHLGNGVSITAVDGGKSIDTTMGFTPLAGTIMGSRCGDIDPAIVTYLIKEKGYSADEVNDILNKKSGILGVSGVGTDFRDIRSAMGENNKRAILATDIFGYQIKKQIGAYAAAMGGLDTIVFTAGIGEHAPEVRIRALTGLEFIGVELDEEKNNSHDIGEGLLISKESSKVKVYVIPTNEELMIAKETLALV.

Mg(2+) is bound at residue Asn7. ATP is bound at residue Lys14. Substrate is bound at residue Arg91. The Proton donor/acceptor role is filled by Asp148. ATP-binding positions include 208–212, 283–285, and 331–335; these read HLGNG, DFR, and GIGEH. Glu386 contacts Mg(2+).

It belongs to the acetokinase family. As to quaternary structure, homodimer. The cofactor is Mg(2+). It depends on Mn(2+) as a cofactor.

It is found in the cytoplasm. The enzyme catalyses acetate + ATP = acetyl phosphate + ADP. It participates in metabolic intermediate biosynthesis; acetyl-CoA biosynthesis; acetyl-CoA from acetate: step 1/2. Catalyzes the formation of acetyl phosphate from acetate and ATP. Can also catalyze the reverse reaction. The protein is Acetate kinase of Clostridium botulinum (strain Alaska E43 / Type E3).